The chain runs to 301 residues: UBX domain-containing protein 2 (301 aa).

The disordered stretch occupies residues 1-61 (MSRNIRTFRD…AARGPDSEAH (61 aa)). Positions 89-153 (TISLTLHLWS…KVNRHHEEYV (65 aa)) constitute an SEP domain. The segment at 176–200 (GQSSSSATTAGTSSATTDHNPDHTA) is disordered. The segment covering 178-192 (SSSSATTAGTSSATT) has biased composition (low complexity). The region spanning 218–295 (MNEPTTNIQI…NVLNSVVAVK (78 aa)) is the UBX domain.

Belongs to the NSFL1C family. In terms of assembly, interacts with cdc-48.1 (via N-terminus) and cdc-48.2 (via N-terminus). Interacts with kinase air-1. Expressed in the germline (at protein level). Expressed in spermatocytes but not in mature sperm (at protein level). Ubiquitously expressed. Predominantly expressed in the spermatheca.

It is found in the cytoplasm. The protein resides in the perinuclear region. Its subcellular location is the nucleus. The protein localises to the cytoskeleton. It localises to the microtubule organizing center. It is found in the centrosome. Functionally, ubiquitin-binding protein which acts as an adapter for ATPase cdc-48.1 and/or cdc-48.2, conferring substrate specificity. Together with ubxn-2 and ubxn-3, plays a role in hermaphrodite spermatogenesis probably by promoting the degradation of sex determination terminal factor tra-1. Probably in association with ATPase cdc-48.1 or/and cdc-48.2, regulates the centrosomal levels of kinase air-1 levels during mitotic progression by promoting air-1 removal from centrosomes in prophase. Also, regulates spindle orientation in the one-cell embryo by controlling centration and rotation of the pronuclei-centrosome complex in prophase. This is UBX domain-containing protein 2 from Caenorhabditis elegans.